The sequence spans 209 residues: Molybdenum cofactor guanylyltransferase (209 aa).

GTP-binding positions include 13 to 15, Lys26, Asn54, Asp72, and Asp107; that span reads LAG. Asp107 is a binding site for Mg(2+).

The protein belongs to the MobA family. Monomer. Requires Mg(2+) as cofactor.

The protein resides in the cytoplasm. It carries out the reaction Mo-molybdopterin + GTP + H(+) = Mo-molybdopterin guanine dinucleotide + diphosphate. Its function is as follows. Transfers a GMP moiety from GTP to Mo-molybdopterin (Mo-MPT) cofactor (Moco or molybdenum cofactor) to form Mo-molybdopterin guanine dinucleotide (Mo-MGD) cofactor. This is Molybdenum cofactor guanylyltransferase from Nitrobacter hamburgensis (strain DSM 10229 / NCIMB 13809 / X14).